The chain runs to 196 residues: uncharacterized protein (196 aa).

This is an uncharacterized protein from Pasteurella multocida (strain Pm70).